A 278-amino-acid polypeptide reads, in one-letter code: Ras-related protein Rab-40B (278 aa).

Residues serine 23, glycine 26, and lysine 27 each contribute to the GTP site. Positions 41-49 (SPYGHPAGI) are switch-I. Position 69 (aspartate 69) interacts with Mg(2+). GTP-binding residues include glycine 72, asparagine 126, and arginine 127. The segment at 72-88 (GQGRFCTIFRSYSRGAQ) is switch-II. The region spanning 175 to 228 (LLRHGMDRLWRPSKVLSLQDLCCRAVVSCTPVHLVDKLPLPIALRSHLKSFSMA) is the SOCS box domain. Residues 242-278 (SLTTSSTHKRSSLRKVKLVRPPQSPPKNCTRNSCKIS) form a disordered region. Basic residues predominate over residues 248 to 259 (THKRSSLRKVKL). Over residues 267–278 (PKNCTRNSCKIS) the composition is skewed to polar residues. Residue cysteine 270 is the site of S-palmitoyl cysteine attachment. Cysteine 275 carries S-geranylgeranyl cysteine lipidation.

Belongs to the small GTPase superfamily. Rab family. Component of the cullin-5-RING E3 ubiquitin-protein ligase complex (ECS(RAB40B) complex) composed of CUL5, Elongin BC (ELOB and ELOC), RNF7/RBX2 and RAB40B; RAB40B interaction with ECS complex is GTP-independent. Binds (GTP-bound) LIMA1; interaction promotes LIMA1 subcellular localization in lamellipodia during cell migration. Interacts (GTP-bound) with TKS5/SH3PXD2A (via PX domain); interaction promotes invadopodia-mediated extracellular matrix degradation. It depends on Mg(2+) as a cofactor.

The protein localises to the cell membrane. Its subcellular location is the cytoplasm. It localises to the cytosol. It is found in the cell projection. The protein resides in the lamellipodium membrane. The protein localises to the ruffle. It carries out the reaction GTP + H2O = GDP + phosphate + H(+). It functions in the pathway protein modification; protein ubiquitination. Its activity is regulated as follows. Regulated by guanine nucleotide exchange factors (GEFs) which promote the exchange of bound GDP for free GTP. Regulated by GTPase activating proteins (GAPs) which increase the GTP hydrolysis activity. Inhibited by GDP dissociation inhibitors (GDIs). Its function is as follows. RAB40B small GTPase acts as substrate-recognition components of the ECS(RAB40B) E3 ubiquitin ligase complex which mediates the ubiquitination of target proteins. The Rab40 subfamily belongs to the Rab family that are key regulators of intracellular membrane trafficking, from the formation of transport vesicles to their fusion with membranes. Rabs cycle between an inactive GDP-bound form and an active GTP-bound form that is able to recruit to membranes different sets of downstream effectors directly responsible for vesicle formation, movement, tethering and fusion. As part of the ECS(RAB40B) complex, GTP-bound RAB40B promotes LIMA1/EPLIN ubiquitination and degradation, thereby regulating leading-edge actin dynamics during cell migration. As part of the ECS(RAB40B) complex, GTP-bound RAB40B also ubiquitinates RAP2A GTPase which promotes its localization to lamellipodia and activation to drive cell migration. The ECS(RAB40B) complex does not mediate canonical ubiquitin-dependent degradation of RAP2. RAB40B also binds TKS5/SH3PXD2A effector independently from ECS complex to promote invadopodia-mediated extracellular matrix degradation. The sequence is that of Ras-related protein Rab-40B from Homo sapiens (Human).